The chain runs to 74 residues: Large ribosomal subunit protein bL31 (74 aa).

Zn(2+) is bound by residues C17, C19, C38, and C41.

This sequence belongs to the bacterial ribosomal protein bL31 family. Type A subfamily. In terms of assembly, part of the 50S ribosomal subunit. It depends on Zn(2+) as a cofactor.

Its function is as follows. Binds the 23S rRNA. The sequence is that of Large ribosomal subunit protein bL31 from Gloeobacter violaceus (strain ATCC 29082 / PCC 7421).